Consider the following 84-residue polypeptide: Exodeoxyribonuclease 7 small subunit (84 aa).

This sequence belongs to the XseB family. As to quaternary structure, heterooligomer composed of large and small subunits.

It localises to the cytoplasm. The enzyme catalyses Exonucleolytic cleavage in either 5'- to 3'- or 3'- to 5'-direction to yield nucleoside 5'-phosphates.. Functionally, bidirectionally degrades single-stranded DNA into large acid-insoluble oligonucleotides, which are then degraded further into small acid-soluble oligonucleotides. In Caulobacter vibrioides (strain ATCC 19089 / CIP 103742 / CB 15) (Caulobacter crescentus), this protein is Exodeoxyribonuclease 7 small subunit.